Here is a 45-residue protein sequence, read N- to C-terminus: Ice-structuring protein SS-8 (45 aa).

Met-1 carries the blocked amino end (Met) modification. 3 repeats span residues 9–21, 22–33, and 34–45; these read KAAR…ALAA, KTAADAAAKAAA, and KAAAIAAAAASA.

This sequence belongs to the type-I AFP family.

Antifreeze proteins lower the blood freezing point. In Myoxocephalus scorpius (Shorthorn sculpin), this protein is Ice-structuring protein SS-8.